The sequence spans 714 residues: Nucleolin (714 aa).

Residues 1 to 303 form a disordered region; the sequence is MVKLAKAGKT…AKKQKVEGSE (303 aa). Residues Lys-9, Lys-15, and Lys-16 each carry the N6-acetyllysine modification. A compositionally biased stretch (acidic residues) spans 24–42; sequence VEEDSEDEEMSEEEDDSSG. 4 positions are modified to phosphoserine: Ser-28, Ser-34, Ser-40, and Ser-41. The segment covering 55-106 has biased composition (low complexity); it reads ATATPAKKVVVSQTKKVAVPTPAKKAAVTPGKKAAATPAKKAVTPAKAVATP. The stretch at 57-64 is repeat 1; that stretch reads ATPAKKVV. The segment at 57-134 is 8 X 8 AA tandem repeats of X-T-P-X-K-K-X-X; the sequence is ATPAKKVVVS…GAVTPAKGAK (78 aa). Ser-66 carries the phosphoserine modification. Residues Thr-68, Thr-75, Thr-83, and Thr-91 each carry the phosphothreonine modification. 3 repeat units span residues 74 to 81, 82 to 89, and 90 to 97. The residue at position 95 (Lys-95) is an N6-acetyllysine. At Thr-98 the chain carries Phosphothreonine. A 5; truncated repeat occupies 98–103; the sequence is TPAKAV. Lys-101 is modified (N6-acetyllysine). The stretch at 104–111 is repeat 6; that stretch reads ATPGKKGA. Phosphothreonine is present on Thr-105. Lys-108 is modified (N6-acetyllysine). Thr-112 is subject to Phosphothreonine. Lys-115 carries the post-translational modification N6-acetyllysine. 2 tandem repeats follow at residues 119-126 and 127-134. The residue at position 120 (Thr-120) is a Phosphothreonine. An N6-acetyllysine modification is found at Lys-123. Residues Ser-144 and Ser-157 each carry the phosphoserine modification. Over residues 144-170 the composition is skewed to acidic residues; the sequence is SDEDEDDDDDEDDSDEDEEDEEEDEFE. Residues 171-187 are compositionally biased toward low complexity; it reads PPVVKGKQGKVAAAAPA. A Phosphoserine modification is found at Ser-188. Over residues 188–216 the composition is skewed to acidic residues; the sequence is SEDEDEEEDEEEEEEDEEEEDDSEEEEAM. Phosphothreonine is present on Thr-219. Residues 240–272 show a composition bias toward acidic residues; the sequence is EEDDDDEEEDEDEEEDEEEEEDEEEEEEEEEEE. The segment covering 285–301 has biased composition (basic and acidic residues); the sequence is MTKQKEVPEAKKQKVEG. A Glycyl lysine isopeptide (Lys-Gly) (interchain with G-Cter in SUMO1); alternate cross-link involves residue Lys-298. Lys-298 participates in a covalent cross-link: Glycyl lysine isopeptide (Lys-Gly) (interchain with G-Cter in SUMO2); alternate. Ser-302 is subject to Phosphoserine. 2 consecutive RRM domains span residues 308-384 and 394-467; these read FNLF…KPKG and RTLL…YTGE. Lys-319 is subject to N6-acetyllysine. Lys-325 is covalently cross-linked (Glycyl lysine isopeptide (Lys-Gly) (interchain with G-Cter in SUMO1); alternate). A Glycyl lysine isopeptide (Lys-Gly) (interchain with G-Cter in SUMO2); alternate cross-link involves residue Lys-325. At Lys-349 the chain carries N6-acetyllysine. A Phosphoserine modification is found at Ser-357. Phosphothreonine is present on Thr-368. A Glycyl lysine isopeptide (Lys-Gly) (interchain with G-Cter in SUMO2) cross-link involves residue Lys-371. Residue Lys-378 forms a Glycyl lysine isopeptide (Lys-Gly) (interchain with G-Cter in SUMO2); alternate linkage. Lys-378 is subject to N6-acetyllysine; alternate. Lys-399 carries the post-translational modification N6-acetyllysine. Phosphoserine is present on Ser-402. Thr-406 is subject to Phosphothreonine. Lys-428 and Lys-445 each carry N6-acetyllysine. Residues Ser-459 and Ser-461 each carry the phosphoserine modification. 2 positions are modified to N6-acetyllysine: Lys-468 and Lys-477. One can recognise an RRM 3 domain in the interval 486 to 560; that stretch reads KTLVLSNLSY…RTIRLELQGP (75 aa). A Glycyl lysine isopeptide (Lys-Gly) (interchain with G-Cter in SUMO2); alternate cross-link involves residue Lys-513. Lys-513 is subject to N6-acetyllysine; alternate. Lys-521 carries the N6-acetyllysine modification. Ser-563 carries the phosphoserine modification. Position 572 is an N6-acetyllysine (Lys-572). In terms of domain architecture, RRM 4 spans 572–647; it reads KTLFVKGLSE…NKVTLDWAKP (76 aa). Lys-577 participates in a covalent cross-link: Glycyl lysine isopeptide (Lys-Gly) (interchain with G-Cter in SUMO2); alternate. An N6-acetyllysine; alternate modification is found at Lys-577. Ser-580 is modified (phosphoserine). Residue Lys-589 forms a Glycyl lysine isopeptide (Lys-Gly) (interchain with G-Cter in SUMO1); alternate linkage. Lys-589 is covalently cross-linked (Glycyl lysine isopeptide (Lys-Gly) (interchain with G-Cter in SUMO2); alternate). Phosphoserine is present on residues Ser-591 and Ser-619. A Glycyl lysine isopeptide (Lys-Gly) (interchain with G-Cter in SUMO2) cross-link involves residue Lys-624. Residues 642–714 form a disordered region; that stretch reads LDWAKPKGEG…KPQGKKTKFE (73 aa). Position 646 is an N6-acetyllysine (Lys-646). A compositionally biased stretch (gly residues) spans 650–703; it reads EGGFGGRGGGRGGFGGRGGGRGGGRGGFGGRGRGGFGGRGGFRGGRGGGGGGGD. 9 positions are modified to asymmetric dimethylarginine: Arg-656, Arg-660, Arg-666, Arg-670, Arg-674, Arg-680, Arg-682, Arg-688, and Arg-692. Arg-695 is modified (asymmetric dimethylarginine; alternate). Arg-695 carries the omega-N-methylarginine; alternate modification.

Identified in a IGF2BP1-dependent mRNP granule complex containing untranslated mRNAs. Component of the SWAP complex that consists of NPM1, NCL/nucleolin, PARP1 and SWAP70. Component of a complex which is at least composed of HTATSF1/Tat-SF1, the P-TEFb complex components CDK9 and CCNT1, RNA polymerase II, SUPT5H, and NCL/nucleolin. Interacts with AICDA. Interacts with APTX. Interacts with C1QBP. Interacts with ERBB4. Interacts (via C-terminus) with FMR1 isoform 6 (via N-terminus). Interacts with GZF1; this interaction is important for nucleolar localization of GZF1. Interacts with NSUN2. Interacts with NVL. Interacts (via N-terminus domain) with SETX. Interacts (via RRM1 and C-terminal RRM4/Arg/Gly-rich domains) with TERT; the interaction is important for nucleolar localization of TERT. Interacts with WDR46. Interacts with ZFP36. Interacts with LRRC34. Interacts with RRP1B. Interacts with HNRNPU; this interaction occurs during mitosis. Interacts with RIOK1; RIOK1 recruits NCL to PRMT5 for symmetrically methylation. Interacts with ZBTB7B. Interacts with MDK; this interaction promotes NCL clustering and lateral movements of this complex into lipid rafts leading to MDK internalization. Interacts with HDGF. Interacts with ALKBH2. Interacts with IGFBP5; this interaction is necessary for IGFBP5 localization to the nucleus. Interacts with DDX24 (when ubiquitinated); this interaction may be important during ribosome biogenesis. Some glutamate residues are glycylated by TTLL8. This modification occurs exclusively on glutamate residues and results in a glycine chain on the gamma-carboxyl group. In terms of processing, symmetrically methylated by PRMT5.

Its subcellular location is the nucleus. The protein resides in the nucleolus. It localises to the cytoplasm. In terms of biological role, nucleolin is the major nucleolar protein of growing eukaryotic cells. It is found associated with intranucleolar chromatin and pre-ribosomal particles. It induces chromatin decondensation by binding to histone H1. It is thought to play a role in pre-rRNA transcription and ribosome assembly. May play a role in the process of transcriptional elongation. Binds RNA oligonucleotides with 5'-UUAGGG-3' repeats more tightly than the telomeric single-stranded DNA 5'-TTAGGG-3' repeats. The sequence is that of Nucleolin (NCL) from Mesocricetus auratus (Golden hamster).